Reading from the N-terminus, the 393-residue chain is NADH-quinone oxidoreductase subunit D (393 aa).

This sequence belongs to the complex I 49 kDa subunit family. As to quaternary structure, NDH-1 is composed of 14 different subunits. Subunits NuoB, C, D, E, F, and G constitute the peripheral sector of the complex.

The protein resides in the cell inner membrane. It catalyses the reaction a quinone + NADH + 5 H(+)(in) = a quinol + NAD(+) + 4 H(+)(out). NDH-1 shuttles electrons from NADH, via FMN and iron-sulfur (Fe-S) centers, to quinones in the respiratory chain. The immediate electron acceptor for the enzyme in this species is believed to be ubiquinone. Couples the redox reaction to proton translocation (for every two electrons transferred, four hydrogen ions are translocated across the cytoplasmic membrane), and thus conserves the redox energy in a proton gradient. This chain is NADH-quinone oxidoreductase subunit D, found in Ehrlichia ruminantium (strain Gardel).